An 89-amino-acid chain; its full sequence is Small ribosomal subunit protein uS15 (89 aa).

This sequence belongs to the universal ribosomal protein uS15 family. Part of the 30S ribosomal subunit. Forms a bridge to the 50S subunit in the 70S ribosome, contacting the 23S rRNA.

One of the primary rRNA binding proteins, it binds directly to 16S rRNA where it helps nucleate assembly of the platform of the 30S subunit by binding and bridging several RNA helices of the 16S rRNA. Functionally, forms an intersubunit bridge (bridge B4) with the 23S rRNA of the 50S subunit in the ribosome. This Azoarcus sp. (strain BH72) protein is Small ribosomal subunit protein uS15.